The primary structure comprises 363 residues: UDP-N-acetylglucosamine--N-acetylmuramyl-(pentapeptide) pyrophosphoryl-undecaprenol N-acetylglucosamine transferase (363 aa).

Residues 10 to 12, Asn124, Ser195, Ile250, and Gln295 each bind UDP-N-acetyl-alpha-D-glucosamine; that span reads TGG.

Belongs to the glycosyltransferase 28 family. MurG subfamily.

It is found in the cell membrane. The catalysed reaction is di-trans,octa-cis-undecaprenyl diphospho-N-acetyl-alpha-D-muramoyl-L-alanyl-D-glutamyl-meso-2,6-diaminopimeloyl-D-alanyl-D-alanine + UDP-N-acetyl-alpha-D-glucosamine = di-trans,octa-cis-undecaprenyl diphospho-[N-acetyl-alpha-D-glucosaminyl-(1-&gt;4)]-N-acetyl-alpha-D-muramoyl-L-alanyl-D-glutamyl-meso-2,6-diaminopimeloyl-D-alanyl-D-alanine + UDP + H(+). It functions in the pathway cell wall biogenesis; peptidoglycan biosynthesis. Its function is as follows. Cell wall formation. Catalyzes the transfer of a GlcNAc subunit on undecaprenyl-pyrophosphoryl-MurNAc-pentapeptide (lipid intermediate I) to form undecaprenyl-pyrophosphoryl-MurNAc-(pentapeptide)GlcNAc (lipid intermediate II). The sequence is that of UDP-N-acetylglucosamine--N-acetylmuramyl-(pentapeptide) pyrophosphoryl-undecaprenol N-acetylglucosamine transferase from Halalkalibacterium halodurans (strain ATCC BAA-125 / DSM 18197 / FERM 7344 / JCM 9153 / C-125) (Bacillus halodurans).